The following is a 209-amino-acid chain: C-type lectin domain family 6 member A (209 aa).

At 1–20 (MVQERHPQRKGVCWTLRLWS) the chain is on the cytoplasmic side. A helical; Signal-anchor for type II membrane protein transmembrane segment spans residues 21–43 (TAVISMLLLSTCFIASCMVTYQF). At 44 to 209 (TMEKPNRRLS…SICETKKIYL (166 aa)) the chain is on the extracellular side. 2 cysteine pairs are disulfide-bonded: C64–C78 and C79–C90. A C-type lectin domain is found at 86–203 (FGSSCYLIST…CDSKHNSICE (118 aa)). Ca(2+) is bound by residues V116, N118, and E122. N131 is a glycosylation site (N-linked (GlcNAc...) asparagine). E168, N170, and E174 together coordinate Ca(2+). Alpha-D-mannopyranose-binding positions include 168 to 170 (EPN), E174, W182, and 190 to 191 (ND). C176 and C194 are joined by a disulfide. Residues N190, D191, and E203 each contribute to the Ca(2+) site.

As to quaternary structure, associated with FCER1G. Heterodimer with CLEC4D; this heterodimer forms a pattern recognition receptor (PRR) against fungal infection.

It is found in the cell membrane. Calcium-dependent lectin that acts as a pattern recognition receptor (PRR) of the innate immune system: specifically recognizes and binds alpha-mannans on C.albicans hypheas. Binding of C.albicans alpha-mannans to this receptor complex leads to phosphorylation of the immunoreceptor tyrosine-based activation motif (ITAM) of FCER1G, triggering activation of SYK, CARD9 and NF-kappa-B, consequently driving maturation of antigen-presenting cells and shaping antigen-specific priming of T-cells toward effector T-helper 1 and T-helper 17 cell subtypes. Also recognizes, in a mannose-dependent manner, allergens from house dust mite and fungi, by promoting cysteinyl leukotriene production. Recognizes soluble elements from the eggs of Shistosoma mansoni altering adaptive immune responses. The sequence is that of C-type lectin domain family 6 member A (CLEC6A) from Rattus norvegicus (Rat).